We begin with the raw amino-acid sequence, 360 residues long: Phospho-N-acetylmuramoyl-pentapeptide-transferase (360 aa).

The Periplasmic portion of the chain corresponds to 1-25 (MLVWLAEHLVKYYSGFNVFSYLTFR). The chain crosses the membrane as a helical span at residues 26-46 (AIVSLLTALFISLWMGPRMIA). The Cytoplasmic portion of the chain corresponds to 47 to 71 (RLQKLSFGQVVRNDGPESHFSKRGT). Residues 72 to 92 (PTMGGIMILTAIVISVLLWAY) traverse the membrane as a helical segment. Residue Pro-93 is a topological domain, periplasmic. The helical transmembrane segment at 94 to 114 (SNPYVWCVLVVLIGYGIIGFV) threads the bilayer. Over 115-131 (DDYRKVVRKDTKGLIAR) the chain is Cytoplasmic. A helical transmembrane segment spans residues 132–152 (WKYFWMSVIALGVAFALYLVG). Residues 153–167 (KDTPVTQLVVPFFKD) lie on the Periplasmic side of the membrane. Residues 168–188 (VMPQLGLFYILLSYFVIVGTG) traverse the membrane as a helical segment. At 189 to 198 (NAVNLTDGLD) the chain is on the cytoplasmic side. Residues 199–219 (GLAIMPTVFVAAGFALVAWAT) traverse the membrane as a helical segment. The Periplasmic portion of the chain corresponds to 220–235 (GNMNFANYLHIPYLRH). The chain crosses the membrane as a helical span at residues 236 to 256 (AGELVIVCTAIVGAGLGFLWF). At 257-262 (NTYPAQ) the chain is on the cytoplasmic side. Residues 263 to 283 (VFMGDVGSLALGGALGIIAVL) traverse the membrane as a helical segment. Residues 284–287 (LRQE) lie on the Periplasmic side of the membrane. The chain crosses the membrane as a helical span at residues 288-308 (FLLVIMGGVFVVETLSVILQV). Residues 309–337 (GSFKLRGQRIFRMAPIHHHYELKGWPEPR) are Cytoplasmic-facing. The chain crosses the membrane as a helical span at residues 338–358 (VIVRFWIISLMLVLIGLATLK). The Periplasmic segment spans residues 359–360 (VR).

The protein belongs to the glycosyltransferase 4 family. MraY subfamily. Mg(2+) is required as a cofactor.

The protein resides in the cell inner membrane. It catalyses the reaction UDP-N-acetyl-alpha-D-muramoyl-L-alanyl-gamma-D-glutamyl-meso-2,6-diaminopimeloyl-D-alanyl-D-alanine + di-trans,octa-cis-undecaprenyl phosphate = di-trans,octa-cis-undecaprenyl diphospho-N-acetyl-alpha-D-muramoyl-L-alanyl-D-glutamyl-meso-2,6-diaminopimeloyl-D-alanyl-D-alanine + UMP. It participates in cell wall biogenesis; peptidoglycan biosynthesis. Catalyzes the initial step of the lipid cycle reactions in the biosynthesis of the cell wall peptidoglycan: transfers peptidoglycan precursor phospho-MurNAc-pentapeptide from UDP-MurNAc-pentapeptide onto the lipid carrier undecaprenyl phosphate, yielding undecaprenyl-pyrophosphoryl-MurNAc-pentapeptide, known as lipid I. The chain is Phospho-N-acetylmuramoyl-pentapeptide-transferase from Salmonella paratyphi C (strain RKS4594).